A 598-amino-acid polypeptide reads, in one-letter code: UvrABC system protein C (598 aa).

Residues 14–91 form the GIY-YIG domain; sequence DSPGCYLHKD…IQKNMPKYNI (78 aa). The region spanning 196 to 231 is the UVR domain; the sequence is DKIIEDLRSKMLAASEEMAFERAAEYRDLISGIATM.

It belongs to the UvrC family. In terms of assembly, interacts with UvrB in an incision complex.

The protein resides in the cytoplasm. In terms of biological role, the UvrABC repair system catalyzes the recognition and processing of DNA lesions. UvrC both incises the 5' and 3' sides of the lesion. The N-terminal half is responsible for the 3' incision and the C-terminal half is responsible for the 5' incision. The protein is UvrABC system protein C of Streptococcus pyogenes serotype M12 (strain MGAS2096).